Here is a 2183-residue protein sequence, read N- to C-terminus: MRRMFLVSRNGYKRWPEKQKLQTFRVLISTYIFSQPPILAQYHTIPCSNLKLYCRRPRSTMAKKNNKKSKAKAKKAAPSVAVPATNVASSVAADPAAVETASSTSASLSVPESAAATETTASTSPTSPVTNVSPLAEAIAGDEGSGSIPDDEEDIDEEEETGTEESAEAEAEPESPEGTTPVLTVQPNALAAEPTVETVDVVVPVPVEPEEDEQESEVKAEIDPVVAEIEQPEPPMASDKDFFSTLSKEEDGEEDVKEVATSTTTDVATPVATATPSITQVEKHLESRFMGNPVVENEKKHKEDEIREVEDQLTERLMRDPVVEGIKRERAEESAQVEEKLEKRFMEDPVVEQIKQEQADEYRKVRDQLETGSEEPNDDFFANLGSEEAKLQAKDTEPDTKHEDDFFSTLGGSSDETGKKTVAETQSEPETKTIETAKAEEAKPIETKTEPVAEDDFFSGLGKSEQEQGFVPEHTTAASTTTKEEDDFMASLAQPQNPEQTDPLPQDDFFSQLAEENVQSVSAEPEHKSPVAAPAATKAAAAEDDFFSQLGKSPEKSVPAAATSDDAPRRRHKVQPSGADFFDQLGVSETEAPPALHEPPQPKPITLSLDEDDDLLLTDEDDQAEVLAEAGKPNPPVQSFAFLEDDDLLESDQDFLETDDEDEEPMAAQTGGDFRANQQHQNTYFPSVPVAPVSTSRYSTPTVPSVSQFGGYGAAQSTPNMYQPVSSQSTPSAAAPGAGKRVDKNKSDAFDFPTGMIPKVVKKARSQQQLPQAHGAPGVTPGLMPAFGAAPGAPPTPGVPPMGPPVARPASNPYAPAPVQPPTTAPKKNFFEELPPIPVKPISRQPSYALSPPRAPFAQEASQQPRRVSDGYGMPSHGGPHSGVHSAPVSHHNSVSGPPAAAPHNPYAPPSGPSAVPPKTSSPYAHPPAAVPPKTSSPYAPPPPAVPPKSSSPYAPPPVSHSAPPAGGPPAGPPRGTSRGVPVPQPQPPVAAAAAAAAAAAAAAGTASGPPPAGPPRVSSRNAYAPPRGAPPRGTTPPVVAPAMAYSPNVSPKRVIQQPQTQSPRRYSEFKDIGQKSTVSDEALRKRQFPIFRWSNSKNATCLIAPQIGYATAVSQTSVRLLDVSKVVSTGEDITRFPGPLFTPNKGPVKSKKKELEKWVADHVNLLDSQNADADRVLLWKLVRVYLANDGVINSAQVRAFLTPHFEQSATGDGSAFTSAMDLSSSSFVPQQGDNGPSFSGSDANHVLRHLQSGSKDAAIRHCMDRRLWGHSMLIASTMGPEKWKDVVSEFIKDDVRPLYKPTLQFLYSSFGGVIPSSEAYGDWKETVSYLLSNAKDDGSDLSSLVSLGDDLVQKGYVAAGHFCYVVSRAPLTDKITLLGSEGRDLDAILLSETYEFALGLKTNVAIPQMQLYKLVHAEVLADLGNVAQAQRYAEYLNQALKSFTDKSSIIQPAYISRLIALSDRVSSTPGATTGSWFSRPKLDKVLGHLDKSLSKFVAGEEANVAGASSASDTVFSQIAATPGISRTTSVVDLSQQSAVTPGYQQHQPYGVPPTRASTGNILRPQGGSGPYDSRPSLPRSSSAMDAGPSGYGYERAPSVASVHSVQSDYPRVMSPIDVGGVSGGNSAYAPVGGAGIYPLPAGGSSAANAYAPGAGGNANAPPSGATANAYTPGATSSGPSPYALPSGNVYAPPSAPSASGASPYAPSASSFSPRQPAYGRSYASTPEHHIEEEEETEAVDQEQEPAADYSHLENENERYEQKSEPEPEPMAHPPPAQKAPPAAPPAQQAPAQKAGQKPPARKVAPPPKPSVKSVYNPYDPGSPAKEKKSSAAASNKYAPANSAYSPGNSSAPAPTANKEPEPATTSEAYGYGYGGGYGGYDPYSGYPAAEEEGAEPTETEVENEKAGEAEAAAADYPDYGVPSYGYQSQAADDAGDYGDDEGAIYTPAAVTLPPISNLPPVPLPGLEPATSAAPPASRYSAPTAAAEEEDDDDFGVGNKKPVAKKEEKKAEEKEEPKDGGKKGWFGGWFKKGEQQPADDKKVYKAKLGEKSNFYYSEEHKRWINGDLPIEDQIKGAGGPPPPPKAKKPAGPPAGGTPPPPSGGAPPVGASRGATPPVATPPAADTPPVPGAGGAPRPAATGAPRPKVVDPLEGFLTGGPPTGAPRKGARKSAKSRYVDIMNN.

8 disordered regions span residues 60–83, 102–198, 247–278, 358–608, 717–1071, 1541–1596, 1693–2044, and 2066–2183; these read TMAKKNNKKSKAKAKKAAPSVAVP, SSTS…TVET, SKEEDGEEDVKEVATSTTTDVATPVATATPSI, QADE…ITLS, STPN…SEFK, TPGY…GYER, PPSA…KKVY, and GDLP…IMNN. Basic residues predominate over residues 64-75; that stretch reads KNNKKSKAKAKK. Residues 102-134 show a composition bias toward low complexity; it reads SSTSASLSVPESAAATETTASTSPTSPVTNVSP. Over residues 149 to 175 the composition is skewed to acidic residues; sequence PDDEEDIDEEEETGTEESAEAEAEPES. Over residues 259–278 the composition is skewed to low complexity; that stretch reads VATSTTTDVATPVATATPSI. 3 stretches are compositionally biased toward basic and acidic residues: residues 358–369, 387–405, and 429–451; these read QADEYRKVRDQL, EEAKLQAKDTEPDTKHEDD, and PETKTIETAKAEEAKPIETKTEP. Polar residues predominate over residues 717-732; sequence STPNMYQPVSSQSTPS. Residues 740–749 are compositionally biased toward basic and acidic residues; sequence KRVDKNKSDA. Positions 781–791 are enriched in low complexity; that stretch reads PGLMPAFGAAP. Pro residues-rich tracts occupy residues 792–807, 815–824, and 906–916; these read GAPPTPGVPPMGPPVA, APAPVQPPTT, and PYAPPSGPSAV. Low complexity-rich tracts occupy residues 990–1008 and 1016–1043; these read VAAAAAAAAAAAAAAGTAS and PRVSSRNAYAPPRGAPPRGTTPPVVAPA. Residues 1697–1714 show a composition bias toward low complexity; that stretch reads PSASGASPYAPSASSFSP. The span at 1733 to 1746 shows a compositional bias: acidic residues; that stretch reads EEEETEAVDQEQEP. The span at 1751-1766 shows a compositional bias: basic and acidic residues; that stretch reads SHLENENERYEQKSEP. A compositionally biased stretch (pro residues) spans 1769–1785; the sequence is EPMAHPPPAQKAPPAAP. Low complexity-rich tracts occupy residues 1786-1804 and 1831-1846; these read PAQQAPAQKAGQKPPARKV and SAAASNKYAPANSAYS. 2 stretches are compositionally biased toward acidic residues: residues 1890–1902 and 1934–1943; these read AEEEGAEPTETEV and DAGDYGDDEG. The segment covering 1957–1966 has biased composition (pro residues); sequence SNLPPVPLPG. Low complexity predominate over residues 1969–1986; it reads PATSAAPPASRYSAPTAA. 2 stretches are compositionally biased toward basic and acidic residues: residues 2004–2022 and 2031–2044; these read AKKEEKKAEEKEEPKDGGK and KKGEQQPADDKKVY. Over residues 2079-2104 the composition is skewed to pro residues; sequence GPPPPPKAKKPAGPPAGGTPPPPSGG. Over residues 2105 to 2117 the composition is skewed to low complexity; sequence APPVGASRGATPP. Residues 2118 to 2130 show a composition bias toward pro residues; it reads VATPPAADTPPVP. The span at 2135 to 2146 shows a compositional bias: low complexity; sequence APRPAATGAPRP.

It belongs to the SEC16 family.

It is found in the endoplasmic reticulum membrane. Involved in the initiation of assembly of the COPII coat required for the formation of transport vesicles from the endoplasmic reticulum (ER) and the selection of cargo molecules. Also involved in autophagy. The sequence is that of COPII coat assembly protein SEC16 (SEC16) from Yarrowia lipolytica (strain CLIB 122 / E 150) (Yeast).